A 259-amino-acid polypeptide reads, in one-letter code: MGSGWLLRSIICLNGTKKNKSNRGNVHSETSNRVKPVESSSAASTKLTVEVAVIRIQKAFRAFKARKRLCSLKSARRFNSLIQGHTVMNQTSTALNVIHSWYDIQNQIRARRLYMVTQGRLQHKRLENRLKLEIKLHELEVEWCGGSETMEEILAKIQQKEEATVKRERAMAYAFSHQWRANATQYLGQASFNLGKESWGWSWKERWIAARPWEIRAQCYVVKPIKPSKKPEKSSPNNVITKTSAKPDEVGNSKKPGSG.

The disordered stretch occupies residues lysine 18–serine 39. An IQ domain is found at glutamate 50–arginine 77. Positions arginine 61 to serine 71 are calmodulin-binding. The tract at residues lysine 226–glycine 259 is disordered.

It belongs to the IQD family. In terms of assembly, binds to multiple calmodulin (CaM) in the presence of Ca(2+) and CaM-like proteins.

The protein localises to the nucleus. It localises to the cytoplasm. Its subcellular location is the cytoskeleton. Its function is as follows. May be involved in cooperative interactions with calmodulins or calmodulin-like proteins. Recruits calmodulin proteins to microtubules, thus being a potential scaffold in cellular signaling and trafficking. May associate with nucleic acids and regulate gene expression at the transcriptional or post-transcriptional level. The sequence is that of Protein IQ-DOMAIN 10 from Arabidopsis thaliana (Mouse-ear cress).